Reading from the N-terminus, the 191-residue chain is Transcription factor E (191 aa).

The 84-residue stretch at 4–87 (RNKELLEIGR…YWHIETKRLP (84 aa)) folds into the HTH TFE/IIEalpha-type domain. Positions 170–191 (APPKKEKKGKKSKKRSKKSKKK) are disordered. Basic residues predominate over residues 174–191 (KEKKGKKSKKRSKKSKKK).

Belongs to the TFE family. In terms of assembly, monomer. Interaction with RNA polymerase subunits RpoF and RpoE is necessary for Tfe stimulatory transcription activity. Able to interact with Tbp and RNA polymerase in the absence of DNA promoter. Interacts both with the preinitiation and elongation complexes.

Functionally, transcription factor that plays a role in the activation of archaeal genes transcribed by RNA polymerase. Facilitates transcription initiation by enhancing TATA-box recognition by TATA-box-binding protein (Tbp), and transcription factor B (Tfb) and RNA polymerase recruitment. Not absolutely required for transcription in vitro, but particularly important in cases where Tbp or Tfb function is not optimal. It dynamically alters the nucleic acid-binding properties of RNA polymerases by stabilizing the initiation complex and destabilizing elongation complexes. Seems to translocate with the RNA polymerase following initiation and acts by binding to the non template strand of the transcription bubble in elongation complexes. This chain is Transcription factor E, found in Pyrococcus horikoshii (strain ATCC 700860 / DSM 12428 / JCM 9974 / NBRC 100139 / OT-3).